The primary structure comprises 365 residues: tRNA N6-adenosine threonylcarbamoyltransferase (365 aa).

Positions 119 and 123 each coordinate Fe cation. Substrate-binding positions include 141–145, aspartate 174, glycine 187, and asparagine 288; that span reads LVSGG. Aspartate 316 is a binding site for Fe cation.

Belongs to the KAE1 / TsaD family. It depends on Fe(2+) as a cofactor.

Its subcellular location is the cytoplasm. It catalyses the reaction L-threonylcarbamoyladenylate + adenosine(37) in tRNA = N(6)-L-threonylcarbamoyladenosine(37) in tRNA + AMP + H(+). Required for the formation of a threonylcarbamoyl group on adenosine at position 37 (t(6)A37) in tRNAs that read codons beginning with adenine. Is involved in the transfer of the threonylcarbamoyl moiety of threonylcarbamoyl-AMP (TC-AMP) to the N6 group of A37, together with TsaE and TsaB. TsaD likely plays a direct catalytic role in this reaction. The polypeptide is tRNA N6-adenosine threonylcarbamoyltransferase (Agrobacterium fabrum (strain C58 / ATCC 33970) (Agrobacterium tumefaciens (strain C58))).